A 73-amino-acid chain; its full sequence is Mucroporin-like peptide (73 aa).

The N-terminal stretch at Met1–Ala22 is a signal peptide. Lys38 is subject to Lysine amide. The propeptide occupies Glu44–Tyr73.

It belongs to the non-disulfide-bridged peptide (NDBP) superfamily. Short antimicrobial peptide (group 4) family. In terms of tissue distribution, expressed by the venom gland.

The protein localises to the secreted. The protein resides in the target cell membrane. Functionally, cationic host defense peptide that have antibacterial activity by breaking membranes. Is more effective on Gram-positive than on Gram-negative bacteria. The polypeptide is Mucroporin-like peptide (Lychas mucronatus (Chinese swimming scorpion)).